We begin with the raw amino-acid sequence, 255 residues long: 3-deoxy-manno-octulosonate cytidylyltransferase (255 aa).

The protein belongs to the KdsB family.

The protein resides in the cytoplasm. The catalysed reaction is 3-deoxy-alpha-D-manno-oct-2-ulosonate + CTP = CMP-3-deoxy-beta-D-manno-octulosonate + diphosphate. The protein operates within nucleotide-sugar biosynthesis; CMP-3-deoxy-D-manno-octulosonate biosynthesis; CMP-3-deoxy-D-manno-octulosonate from 3-deoxy-D-manno-octulosonate and CTP: step 1/1. It functions in the pathway bacterial outer membrane biogenesis; lipopolysaccharide biosynthesis. Activates KDO (a required 8-carbon sugar) for incorporation into bacterial lipopolysaccharide in Gram-negative bacteria. The sequence is that of 3-deoxy-manno-octulosonate cytidylyltransferase from Xanthobacter autotrophicus (strain ATCC BAA-1158 / Py2).